Here is a 258-residue protein sequence, read N- to C-terminus: ADP-dependent (S)-NAD(P)H-hydrate dehydratase (258 aa).

The YjeF C-terminal domain occupies 1-258 (MGRLQRTLSN…VIECIPKTIR (258 aa)). Glycine 201 serves as a coordination point for AMP. (6S)-NADPHX is bound at residue aspartate 202.

The protein belongs to the NnrD/CARKD family. As to quaternary structure, homotetramer. The cofactor is Mg(2+).

The enzyme catalyses (6S)-NADHX + ADP = AMP + phosphate + NADH + H(+). The catalysed reaction is (6S)-NADPHX + ADP = AMP + phosphate + NADPH + H(+). Catalyzes the dehydration of the S-form of NAD(P)HX at the expense of ADP, which is converted to AMP. Together with NAD(P)HX epimerase, which catalyzes the epimerization of the S- and R-forms, the enzyme allows the repair of both epimers of NAD(P)HX, a damaged form of NAD(P)H that is a result of enzymatic or heat-dependent hydration. The sequence is that of ADP-dependent (S)-NAD(P)H-hydrate dehydratase from Natrialba magadii (strain ATCC 43099 / DSM 3394 / CCM 3739 / CIP 104546 / IAM 13178 / JCM 8861 / NBRC 102185 / NCIMB 2190 / MS3) (Natronobacterium magadii).